We begin with the raw amino-acid sequence, 304 residues long: Protoheme IX farnesyltransferase (304 aa).

7 helical membrane-spanning segments follow: residues 24 to 44 (VMTL…GTIH), 45 to 65 (PVIA…AAAL), 107 to 127 (VFVM…FSIF), 145 to 165 (IVIG…AVTG), 172 to 192 (VLLF…LALF), 234 to 254 (WIGG…LVFV), and 277 to 297 (LFGY…GDRL).

Belongs to the UbiA prenyltransferase family. Protoheme IX farnesyltransferase subfamily.

It localises to the cell inner membrane. The catalysed reaction is heme b + (2E,6E)-farnesyl diphosphate + H2O = Fe(II)-heme o + diphosphate. The protein operates within porphyrin-containing compound metabolism; heme O biosynthesis; heme O from protoheme: step 1/1. Functionally, converts heme B (protoheme IX) to heme O by substitution of the vinyl group on carbon 2 of heme B porphyrin ring with a hydroxyethyl farnesyl side group. The sequence is that of Protoheme IX farnesyltransferase from Novosphingobium aromaticivorans (strain ATCC 700278 / DSM 12444 / CCUG 56034 / CIP 105152 / NBRC 16084 / F199).